The sequence spans 132 residues: Large ribosomal subunit protein bL20c (132 aa).

Belongs to the bacterial ribosomal protein bL20 family.

It localises to the plastid. Its subcellular location is the chloroplast. Its function is as follows. Binds directly to 23S ribosomal RNA and is necessary for the in vitro assembly process of the 50S ribosomal subunit. It is not involved in the protein synthesizing functions of that subunit. The protein is Large ribosomal subunit protein bL20c of Coffea arabica (Arabian coffee).